Reading from the N-terminus, the 441-residue chain is Ribosomal protein uS12 methylthiotransferase RimO (441 aa).

The MTTase N-terminal domain occupies 8 to 118 (PKIGFVSLGC…VLEHVHHYSP (111 aa)). Residues Cys-17, Cys-53, Cys-82, Cys-150, Cys-154, and Cys-157 each contribute to the [4Fe-4S] cluster site. Positions 136-373 (LTPRHYAYLK…MQLQQQISAE (238 aa)) constitute a Radical SAM core domain. The region spanning 376-441 (QEKVGREILV…DEYDLWGTRV (66 aa)) is the TRAM domain.

The protein belongs to the methylthiotransferase family. RimO subfamily. [4Fe-4S] cluster serves as cofactor.

The protein resides in the cytoplasm. It carries out the reaction L-aspartate(89)-[ribosomal protein uS12]-hydrogen + (sulfur carrier)-SH + AH2 + 2 S-adenosyl-L-methionine = 3-methylsulfanyl-L-aspartate(89)-[ribosomal protein uS12]-hydrogen + (sulfur carrier)-H + 5'-deoxyadenosine + L-methionine + A + S-adenosyl-L-homocysteine + 2 H(+). In terms of biological role, catalyzes the methylthiolation of an aspartic acid residue of ribosomal protein uS12. The chain is Ribosomal protein uS12 methylthiotransferase RimO from Klebsiella pneumoniae (strain 342).